A 711-amino-acid polypeptide reads, in one-letter code: Ribosomal RNA large subunit methyltransferase K/L (711 aa).

The 112-residue stretch at 43–154 (TLYRTLLWSR…RENLVISLDL (112 aa)) folds into the THUMP domain.

Belongs to the methyltransferase superfamily. RlmKL family.

Its subcellular location is the cytoplasm. The enzyme catalyses guanosine(2445) in 23S rRNA + S-adenosyl-L-methionine = N(2)-methylguanosine(2445) in 23S rRNA + S-adenosyl-L-homocysteine + H(+). It carries out the reaction guanosine(2069) in 23S rRNA + S-adenosyl-L-methionine = N(2)-methylguanosine(2069) in 23S rRNA + S-adenosyl-L-homocysteine + H(+). Functionally, specifically methylates the guanine in position 2445 (m2G2445) and the guanine in position 2069 (m7G2069) of 23S rRNA. The sequence is that of Ribosomal RNA large subunit methyltransferase K/L from Haemophilus influenzae (strain ATCC 51907 / DSM 11121 / KW20 / Rd).